A 382-amino-acid polypeptide reads, in one-letter code: Sialidase (382 aa).

R37 is a substrate binding site. Catalysis depends on D62, which acts as the Proton acceptor. BNR repeat units lie at residues 71–82 (ARSTDFGKTWSY), 140–151 (IYSDDNGLTWSN), and 208–219 (IYSKDNGETWTM). Position 245 (R245) interacts with substrate. One copy of the BNR 4 repeat lies at 255–266 (YISHDLGTTWEI). Y347 acts as the Nucleophile in catalysis.

The protein belongs to the glycosyl hydrolase 33 family.

It localises to the secreted. It catalyses the reaction Hydrolysis of alpha-(2-&gt;3)-, alpha-(2-&gt;6)-, alpha-(2-&gt;8)- glycosidic linkages of terminal sialic acid residues in oligosaccharides, glycoproteins, glycolipids, colominic acid and synthetic substrates.. Its function is as follows. Sialidases have been suggested to be pathogenic factors in microbial infections. In Clostridium perfringens, this protein is Sialidase (nanH).